A 360-amino-acid polypeptide reads, in one-letter code: Chorismate synthase (360 aa).

Arg47 is an NADP(+) binding site. FMN-binding positions include 124 to 126, 240 to 241, Gly285, 300 to 304, and Arg326; these read RSS, NA, and KPVAT.

This sequence belongs to the chorismate synthase family. As to quaternary structure, homotetramer. FMNH2 serves as cofactor.

It catalyses the reaction 5-O-(1-carboxyvinyl)-3-phosphoshikimate = chorismate + phosphate. It participates in metabolic intermediate biosynthesis; chorismate biosynthesis; chorismate from D-erythrose 4-phosphate and phosphoenolpyruvate: step 7/7. Functionally, catalyzes the anti-1,4-elimination of the C-3 phosphate and the C-6 proR hydrogen from 5-enolpyruvylshikimate-3-phosphate (EPSP) to yield chorismate, which is the branch point compound that serves as the starting substrate for the three terminal pathways of aromatic amino acid biosynthesis. This reaction introduces a second double bond into the aromatic ring system. In Cytophaga hutchinsonii (strain ATCC 33406 / DSM 1761 / CIP 103989 / NBRC 15051 / NCIMB 9469 / D465), this protein is Chorismate synthase.